Consider the following 582-residue polypeptide: Pineapple eye protein (582 aa).

Residues 6–44 (ELQCLICKYSDTDDLVFGEWMIVRNLQVHYFCLLLSTHL) form a C2HC pre-PHD-type zinc finger. The tract at residues 6–119 (ELQCLICKYS…QYKSYCYKCR (114 aa)) is extended PHD domain (ePHD). The PHD-type; atypical zinc finger occupies 72 to 119 (RKCWYCNKIGASLQCDRCRSLFHLKCGLENRAVFEFCGQYKSYCYKCR). 2 disordered regions span residues 292 to 311 (PART…DGSF) and 323 to 422 (RSLT…ASEI). Over residues 340 to 363 (SSNITVIFSQPKSNATSERLSLSP) the composition is skewed to polar residues. Positions 383 to 399 (SIDENHSPQPIARRDTS) are enriched in basic and acidic residues.

Its function is as follows. Required for survival of imaginal disk cells possibly by regulation of cell apoptosis. Required for germline stem cell self-renewal through mediation of BMP signaling. The sequence is that of Pineapple eye protein from Drosophila melanogaster (Fruit fly).